The following is a 277-amino-acid chain: Elongation factor 1-delta (277 aa).

The residue at position 2 (alanine 2) is an N-acetylalanine. The residue at position 17 (lysine 17) is an N6-acetyllysine. A phosphoserine mark is found at serine 37, serine 44, serine 60, serine 86, and serine 106. N6-acetyllysine is present on lysine 107. The interval 113 to 171 (SALEKSSPAHRATTPQTQHVSPMRQVEPPSRKAATATEDDEDDDIDLFGSDEEEDKEAA) is disordered. N6-acetyllysine; alternate is present on lysine 117. Position 117 is an N6-succinyllysine; alternate (lysine 117). Serine 119 is modified (phosphoserine). Threonine 129 bears the Phosphothreonine mark. A Phosphoserine modification is found at serine 133. Threonine 147 carries the post-translational modification Phosphothreonine. Residues 149 to 168 (TEDDEDDDIDLFGSDEEEDK) show a composition bias toward acidic residues. The residue at position 162 (serine 162) is a Phosphoserine; by CK2.

The protein belongs to the EF-1-beta/EF-1-delta family. EF-1 is composed of 4 subunits: alpha, beta, delta, and gamma.

Its function is as follows. EF-1-beta and EF-1-delta stimulate the exchange of GDP bound to EF-1-alpha to GTP. This chain is Elongation factor 1-delta (EEF1D), found in Ovis aries (Sheep).